We begin with the raw amino-acid sequence, 429 residues long: MRDALNTGLIEFLKASPTPFHATASLVQRLEAAGYKRLDERDSWDTETGGRYYVTRNDSSIIAIKLGKQSPLLNGIRMVGAHTDSPCLRVKPQPELQRQGFLQLGVEVYGGALLAPWFDRDLSLAGRVTYRRDGKVESQLIDFKLPVAIIPNLAIHLNRTANEGWAINPQNELPPILAQVAGDERIDFRALLTEQLAREHELIADVVLDYELSFYDTQDAALIGLNGDFIAGARLDNLLSCYAGLQALLAADSDETCVLVCNDHEEVGSCSACGADGPMLEQTLQRLLPDGDTYVRTVQRSLMVSADNAHGVHPNYADKHDGNHGPKLNAGPVIKVNNNQRYATNSETAGFFRHLCMAEEVPVQSFVVRSDMGCGSTIGPITASHLGVRTVDIGLPTFAMHSIRELCGSHDLAHLVKVLTAFYRSRELP.

Positions 82, 156, and 401 each coordinate Zn(2+).

Belongs to the peptidase M18 family. The cofactor is Zn(2+).

This Pseudomonas putida (strain ATCC 47054 / DSM 6125 / CFBP 8728 / NCIMB 11950 / KT2440) protein is Probable M18 family aminopeptidase 2.